The sequence spans 63 residues: uncharacterized protein (63 aa).

A helical membrane pass occupies residues Ile-3–Ser-23.

It is found in the membrane. This is an uncharacterized protein from Haemophilus influenzae (strain ATCC 51907 / DSM 11121 / KW20 / Rd).